The primary structure comprises 218 residues: MARKKVRPRLIAELARRVRALREQLNRPRDSQLYAVDYETLTRPFSGRRLPVRAWADVRRESRLLQLLGRLPLFGLGRLVTRKSWLWQHDEPCYWRLTRVRPDYTAQNLDHGKAWGILTFKGKTESEAREIEHVMYHDWRLVPKHEEEAFTAFTPAPEDSLASVPYPPLLRAMIIAERQKNGDTSTEEPMLNVQRIRMEPWDYPAKQEDKGRAKGTPV.

A disordered region spans residues 180 to 218; the sequence is KNGDTSTEEPMLNVQRIRMEPWDYPAKQEDKGRAKGTPV. A compositionally biased stretch (basic and acidic residues) spans 196–212; the sequence is IRMEPWDYPAKQEDKGR.

This sequence belongs to the mitochondrion-specific ribosomal protein mS34 family. As to quaternary structure, component of the mitochondrial small ribosomal subunit (mt-SSU). Mature mammalian 55S mitochondrial ribosomes consist of a small (28S) and a large (39S) subunit. The 28S small subunit contains a 12S ribosomal RNA (12S mt-rRNA) and 30 different proteins. The 39S large subunit contains a 16S rRNA (16S mt-rRNA), a copy of mitochondrial valine transfer RNA (mt-tRNA(Val)), which plays an integral structural role, and 52 different proteins.

The protein resides in the mitochondrion. In terms of biological role, required for mitochondrial translation, plays a role in maintaining the stability of the small ribosomal subunit and the 12S rRNA that are required for mitoribosome formation. The polypeptide is Small ribosomal subunit protein mS34 (MRPS34) (Homo sapiens (Human)).